We begin with the raw amino-acid sequence, 311 residues long: Malate dehydrogenase (311 aa).

Residues 7-13 and Asp-34 each bind NAD(+); that span reads GAAGGIG. 2 residues coordinate substrate: Arg-81 and Arg-87. NAD(+)-binding positions include Asn-94 and 117-119; that span reads ITN. Substrate is bound by residues Asn-119 and Arg-153. Residue His-177 is the Proton acceptor of the active site. An NAD(+)-binding site is contributed by Met-227.

This sequence belongs to the LDH/MDH superfamily. MDH type 1 family. Homodimer.

It catalyses the reaction (S)-malate + NAD(+) = oxaloacetate + NADH + H(+). Its function is as follows. Catalyzes the reversible oxidation of malate to oxaloacetate. The polypeptide is Malate dehydrogenase (Shewanella pealeana (strain ATCC 700345 / ANG-SQ1)).